The following is a 282-amino-acid chain: Glycine betaine transport system permease protein OpuAB (282 aa).

Topologically, residues 1–18 are extracellular; the sequence is MDRLPRIPLADIIDRFVD. Residues 19-39 form a helical membrane-spanning segment; it reads WITMTFGGFFDGIANGLAAFV. Residues 40 to 44 lie on the Cytoplasmic side of the membrane; sequence NGIVT. A helical transmembrane segment spans residues 45–65; that stretch reads GLGFIPSILLTIIFAALAWWI. The Extracellular segment spans residues 66-69; it reads STRG. The chain crosses the membrane as a helical span at residues 70–90; that stretch reads IALFTLIGFLLIDYLGYWDPM. The region spanning 90-269 is the ABC transmembrane type-1 domain; sequence MLQTLALVLT…IVAITLDRIT (180 aa). Residues 91–93 lie on the Cytoplasmic side of the membrane; that stretch reads LQT. A helical membrane pass occupies residues 94–114; it reads LALVLTSVIISIVVGVPIGIW. Residues 115 to 137 are Extracellular-facing; the sequence is ASQKETVRRIVTPILDLMQTMPA. Residues 138 to 158 traverse the membrane as a helical segment; the sequence is FVYLLPAIFFFNIGVVPGVVA. At 159 to 215 the chain is on the cytoplasmic side; the sequence is SVIFAMPPTIRMTVLGIKQVPADLIEATEAFGSTTAQRLFKVQLPLATKTILAGINQ. A helical transmembrane segment spans residues 216-236; it reads SIMLALSMVVIAAMVGAPGLG. Residues 237–242 lie on the Extracellular side of the membrane; it reads SEVYSA. A helical membrane pass occupies residues 243–263; sequence VTQLKTGVGVEAGIAIVIVAI. The Cytoplasmic portion of the chain corresponds to 264–282; that stretch reads TLDRITQNIKVKKKSRGNA.

Belongs to the binding-protein-dependent transport system permease family. CysTW subfamily. The complex is composed of two ATP-binding proteins (OpuAA), two transmembrane proteins (OpuAB) and a solute-binding protein (OpuAC).

The protein resides in the cell membrane. Functionally, involved in a multicomponent binding-protein-dependent transport system for glycine betaine; probably responsible for the translocation of the substrate across the membrane. This Bacillus subtilis (strain 168) protein is Glycine betaine transport system permease protein OpuAB (opuAB).